A 156-amino-acid polypeptide reads, in one-letter code: Small ribosomal subunit protein uS7 (156 aa).

Belongs to the universal ribosomal protein uS7 family. As to quaternary structure, part of the 30S ribosomal subunit. Contacts proteins S9 and S11.

Functionally, one of the primary rRNA binding proteins, it binds directly to 16S rRNA where it nucleates assembly of the head domain of the 30S subunit. Is located at the subunit interface close to the decoding center, probably blocks exit of the E-site tRNA. The chain is Small ribosomal subunit protein uS7 from Aliivibrio fischeri (strain MJ11) (Vibrio fischeri).